We begin with the raw amino-acid sequence, 321 residues long: Olfactory receptor 3A3 (321 aa).

Residues 1–34 lie on the Extracellular side of the membrane; sequence MSLQKLMEPEAGTNRTAVAEFILLGLVQTEEMQP. N-linked (GlcNAc...) asparagine glycosylation occurs at N14. A helical membrane pass occupies residues 35-58; it reads VVFVLLLFAYLVTTGGNLSILAAV. The Cytoplasmic segment spans residues 59–66; the sequence is LVEPKLHA. Residues 67-88 traverse the membrane as a helical segment; it reads PMYFFLGNLSVLDVGCITVTVP. Residues 89-109 lie on the Extracellular side of the membrane; the sequence is AMLGRLLSHKSTISYDACLSQ. The cysteines at positions 106 and 198 are disulfide-linked. The chain crosses the membrane as a helical span at residues 110–129; that stretch reads LFFFHLLAGMDCFLLTAMAY. At 130–149 the chain is on the cytoplasmic side; it reads DRLLAICQPLTYSTRMSQTV. Residues 150–167 traverse the membrane as a helical segment; sequence QRMLVAASWACAFTNALT. The Extracellular segment spans residues 168–205; that stretch reads HTVAMSTLNFCGPNEVNHFYCDLPQLFQLSCSSTQLNE. A helical transmembrane segment spans residues 206–228; sequence LLLFVAAAFMAVAPLVFISVSYA. Topologically, residues 229 to 245 are cytoplasmic; the sequence is HVVAAVLQIRSAEGRKK. The chain crosses the membrane as a helical span at residues 246–268; it reads AFSTCGSHLTVVGIFYGTGVFSY. Over 269–281 the chain is Extracellular; sequence MRLGSVESSDKDK. A helical membrane pass occupies residues 282–301; that stretch reads GVGVFMTVINPMLNPLIYSL. Residues 302 to 321 are Cytoplasmic-facing; that stretch reads RNTDVQGALCQLLVGKRSLT.

Belongs to the G-protein coupled receptor 1 family.

Its subcellular location is the cell membrane. Odorant receptor. The polypeptide is Olfactory receptor 3A3 (OR3A3) (Homo sapiens (Human)).